A 238-amino-acid polypeptide reads, in one-letter code: Orotidine 5'-phosphate decarboxylase (238 aa).

Substrate-binding positions include D18, K40, 67–76, T122, R183, Q192, and R213; that span reads DMKLLDIDNT. The active-site Proton donor is K69.

This sequence belongs to the OMP decarboxylase family. Type 1 subfamily. As to quaternary structure, homodimer.

It catalyses the reaction orotidine 5'-phosphate + H(+) = UMP + CO2. It functions in the pathway pyrimidine metabolism; UMP biosynthesis via de novo pathway; UMP from orotate: step 2/2. Its function is as follows. Catalyzes the decarboxylation of orotidine 5'-monophosphate (OMP) to uridine 5'-monophosphate (UMP). The polypeptide is Orotidine 5'-phosphate decarboxylase (Brucella canis (strain ATCC 23365 / NCTC 10854 / RM-666)).